Consider the following 234-residue polypeptide: Phosphoribosylaminoimidazole-succinocarboxamide synthase (234 aa).

It belongs to the SAICAR synthetase family.

The enzyme catalyses 5-amino-1-(5-phospho-D-ribosyl)imidazole-4-carboxylate + L-aspartate + ATP = (2S)-2-[5-amino-1-(5-phospho-beta-D-ribosyl)imidazole-4-carboxamido]succinate + ADP + phosphate + 2 H(+). The protein operates within purine metabolism; IMP biosynthesis via de novo pathway; 5-amino-1-(5-phospho-D-ribosyl)imidazole-4-carboxamide from 5-amino-1-(5-phospho-D-ribosyl)imidazole-4-carboxylate: step 1/2. The chain is Phosphoribosylaminoimidazole-succinocarboxamide synthase from Pyrobaculum aerophilum (strain ATCC 51768 / DSM 7523 / JCM 9630 / CIP 104966 / NBRC 100827 / IM2).